We begin with the raw amino-acid sequence, 226 residues long: MKMETFLVCLFHNADGLHQQIQEILYLLRMHIYETNLYLKQELSRLIYPNRQLSFVLLMPLSLLRNWDDIEYLTDVVDDKQTLHYAANLLTNYVLHLSMFQKLTKPYFLLAVKRVSEKLNKKQQHSFYEVLVTSETLNNYENLSKNILNTLMFAVRYVFKPTPNYSEILAELEKKNKIHHIIFNMVITDFAQIREQQMDKHLCETNNKLRQECKETIFDLKVVGNV.

A signal peptide spans Met-1 to Gly-16. 2 N-linked (GlcNAc...) asparagine; by host glycosylation sites follow: Asn-142 and Asn-164.

It belongs to the asfivirus I226R family.

Functionally, plays a role in the inhibition of host NF-kappa-B and IRF3 signaling pathways. Mechanistically, promotes the degradation of host IKBKG through enhancing its ubiquitination leading to inhibition of both pathways. The chain is Late protein I226R from African swine fever virus (isolate Warthog/Namibia/Wart80/1980) (ASFV).